Here is a 502-residue protein sequence, read N- to C-terminus: Pentatricopeptide repeat-containing protein At4g01990, mitochondrial (502 aa).

A mitochondrion-targeting transit peptide spans 1 to 13; that stretch reads MMHSVSRLARRFC. 7 PPR repeats span residues 139–173, 174–208, 209–243, 245–275, 280–310, 315–345, and 350–381; these read NQSTYGSLLNCYCVEKEEVKAKAHFENMVDLNHVS, NSLPFNNLMAMYMGLGQPEKVPALVVAMKEKSITP, CDITYSMWIQSCGSLKDLDGVEKVLDEMKAEGEGI, SWNTFANLAAIYIKVGLYGKAEEALKSLENN, VRDCYHFLINLYTGIANASEVYRVWDLLKKR, NNSSYLTMLRALSKLDDIDGVKKVFAEWEST, and DMRMANVAISSYLKQNMYEEAEAVFNGAMKKC.

Belongs to the PPR family. P subfamily.

The protein resides in the mitochondrion. The polypeptide is Pentatricopeptide repeat-containing protein At4g01990, mitochondrial (Arabidopsis thaliana (Mouse-ear cress)).